A 362-amino-acid chain; its full sequence is Alcohol dehydrogenase 13 (362 aa).

7 residues coordinate Zn(2+): C51, H73, C104, C107, C110, C118, and C168. H73 is a substrate binding site. NAD(+) contacts are provided by residues 193–198 (GLGGLG) and 280–282 (VGA).

This sequence belongs to the zinc-containing alcohol dehydrogenase family. Class-III subfamily. Homodimer. Zn(2+) is required as a cofactor.

This is Alcohol dehydrogenase 13 from Catharanthus roseus (Madagascar periwinkle).